A 338-amino-acid polypeptide reads, in one-letter code: RNA 3'-terminal phosphate cyclase (338 aa).

ATP-binding positions include Q103 and 283–287; that span reads YLADQ. H308 serves as the catalytic Tele-AMP-histidine intermediate.

It belongs to the RNA 3'-terminal cyclase family. Type 1 subfamily.

Its subcellular location is the cytoplasm. It catalyses the reaction a 3'-end 3'-phospho-ribonucleotide-RNA + ATP = a 3'-end 2',3'-cyclophospho-ribonucleotide-RNA + AMP + diphosphate. Its function is as follows. Catalyzes the conversion of 3'-phosphate to a 2',3'-cyclic phosphodiester at the end of RNA. The mechanism of action of the enzyme occurs in 3 steps: (A) adenylation of the enzyme by ATP; (B) transfer of adenylate to an RNA-N3'P to produce RNA-N3'PP5'A; (C) and attack of the adjacent 2'-hydroxyl on the 3'-phosphorus in the diester linkage to produce the cyclic end product. The biological role of this enzyme is unknown but it is likely to function in some aspects of cellular RNA processing. This is RNA 3'-terminal phosphate cyclase from Escherichia coli O6:K15:H31 (strain 536 / UPEC).